A 73-amino-acid polypeptide reads, in one-letter code: UPF0150 protein ssl0259 (73 aa).

The protein belongs to the UPF0150 family.

This is UPF0150 protein ssl0259 from Synechocystis sp. (strain ATCC 27184 / PCC 6803 / Kazusa).